A 360-amino-acid chain; its full sequence is Magnesium transporter NIPA2 (360 aa).

Topologically, residues 1–9 (MSQGHGKYD) are extracellular. Residues 10–30 (FYIGLGLAMSSSIFIGGSFIL) form a helical membrane-spanning segment. Residues 31 to 56 (KKKGLLRLARKGSTRAGQGGHAYLKE) are Cytoplasmic-facing. A helical membrane pass occupies residues 57–77 (WLWWAGLLSMGAGEVANFAAY). Position 78 (alanine 78) is a topological domain, extracellular. The chain crosses the membrane as a helical span at residues 79–99 (FAPATLVTPLGALSVLVSAIL). At 100-107 (SSYFLNER) the chain is on the cytoplasmic side. Residues 108–128 (LNLHGKIGCLLSILGSTVMVI) form a helical membrane-spanning segment. Topologically, residues 129–149 (HAPKEEEIETLNEMSHKLGDP) are extracellular. A helical membrane pass occupies residues 150-170 (GFVVFATLVVIVSLILIFVVG). Residues 171–175 (PRHGQ) lie on the Cytoplasmic side of the membrane. Residues 176–196 (TNILVYITICSVIGAVSVSCA) form a helical membrane-spanning segment. The Extracellular segment spans residues 197–215 (KGLGIAIKELFAGKPVLQH). The chain crosses the membrane as a helical span at residues 216–236 (PLTWILLLSLIVCVSTQINYL). Over 237–246 (NRALDIFNTS) the chain is Cytoplasmic. Residues 247 to 267 (IVTPIYYVFFTTSVITCSAIL) form a helical membrane-spanning segment. Residues 268–278 (FKEWQDMPVDD) are Extracellular-facing. A helical membrane pass occupies residues 279 to 299 (VIGTLSGFFTIIVGIFLLHAF). Topologically, residues 300-360 (KDVSFSLSSL…SRRNGNLTAF (61 aa)) are cytoplasmic.

It belongs to the NIPA family.

It localises to the cell membrane. It is found in the early endosome. It catalyses the reaction Mg(2+)(in) = Mg(2+)(out). Functionally, acts as a selective Mg(2+) transporter. The protein is Magnesium transporter NIPA2 (NIPA2) of Bos taurus (Bovine).